Reading from the N-terminus, the 38-residue chain is Histone H5 (38 aa).

Positions 1–15 (TESPIPVPAPAPAAK) are enriched in pro residues. Residues 1–38 (TESPIPVPAPAPAAKPKPKRVSKRPASHPPYSDMIAAA) are disordered. Residues 16 to 26 (PKPKRVSKRPA) are compositionally biased toward basic residues.

This sequence belongs to the histone H1/H5 family. In terms of tissue distribution, erythroid cells.

The protein resides in the nucleus. Its subcellular location is the chromosome. In terms of biological role, histone H5 performs the same function as H1, being necessary for the condensation of nucleosome chains into higher order structures, and replaces histone H1 in certain cells. The chain is Histone H5 from Columba livia (Rock dove).